Reading from the N-terminus, the 101-residue chain is NAD(P)H-quinone oxidoreductase subunit 4L, chloroplastic (101 aa).

3 helical membrane passes run 2–22 (ILEHVLVLSAYLFSIGIYGLI), 32–52 (MCLELILNAVNINFVTFSDFF), and 61–81 (IFSIFVIAIAAAEAAIGLAIV).

It belongs to the complex I subunit 4L family. NDH is composed of at least 16 different subunits, 5 of which are encoded in the nucleus.

The protein resides in the plastid. It localises to the chloroplast thylakoid membrane. It catalyses the reaction a plastoquinone + NADH + (n+1) H(+)(in) = a plastoquinol + NAD(+) + n H(+)(out). The enzyme catalyses a plastoquinone + NADPH + (n+1) H(+)(in) = a plastoquinol + NADP(+) + n H(+)(out). Its function is as follows. NDH shuttles electrons from NAD(P)H:plastoquinone, via FMN and iron-sulfur (Fe-S) centers, to quinones in the photosynthetic chain and possibly in a chloroplast respiratory chain. The immediate electron acceptor for the enzyme in this species is believed to be plastoquinone. Couples the redox reaction to proton translocation, and thus conserves the redox energy in a proton gradient. The protein is NAD(P)H-quinone oxidoreductase subunit 4L, chloroplastic of Nicotiana sylvestris (Wood tobacco).